A 328-amino-acid polypeptide reads, in one-letter code: Probable cell division protein WhiA (328 aa).

The H-T-H motif DNA-binding region spans 275–308 (SLEELGQLASPPMTKDAVAGRIRRLLSMADKRAE).

The protein belongs to the WhiA family.

Functionally, involved in cell division and chromosome segregation. The polypeptide is Probable cell division protein WhiA (Corynebacterium urealyticum (strain ATCC 43042 / DSM 7109)).